The chain runs to 279 residues: Phospholipase A and acyltransferase 5 (279 aa).

Disordered stretches follow at residues 1–53 and 70–117; these read MGLS…GLNS and QLPA…ENEG. Over residues 97-106 the composition is skewed to polar residues; it reads LETTPSQKAD. Residues 135–249 form the LRAT domain; that stretch reads LIEIFRIGYE…LRYGVPRSQQ (115 aa). Active-site residues include histidine 145 and histidine 157. Residue cysteine 233 is the Acyl-thioester intermediate of the active site.

It belongs to the H-rev107 family. In terms of tissue distribution, highest expression level in testis and pancreas.

It is found in the cytoplasm. The protein resides in the cytosol. It carries out the reaction a 1,2-diacyl-sn-glycero-3-phosphocholine + H2O = a 1-acyl-sn-glycero-3-phosphocholine + a fatty acid + H(+). It catalyses the reaction a 1,2-diacyl-sn-glycero-3-phosphocholine + H2O = a 2-acyl-sn-glycero-3-phosphocholine + a fatty acid + H(+). The catalysed reaction is 1-hexadecanoyl-2-(5Z,8Z,11Z,14Z-eicosatetraenoyl)-sn-glycero-3-phosphocholine + 1,2-di-(9Z-octadecenoyl)-sn-glycero-3-phosphoethanolamine = N-(5Z,8Z,11Z,14Z-eicosatetraenoyl)-1,2-di-(9Z-octadecenoyl)-sn-glycero-3-phosphoethanolamine + 1-hexadecanoyl-sn-glycero-3-phosphocholine + H(+). The enzyme catalyses 1,2-di-(9Z-octadecenoyl)-sn-glycero-3-phosphoethanolamine + 1,2-dihexadecanoyl-sn-glycero-3-phosphocholine = N-hexadecanoyl-1,2-di-(9Z-octadecenoyl)-sn-glycero-3-phosphoethanolamine + 1-hexadecanoyl-sn-glycero-3-phosphocholine + H(+). It carries out the reaction 1,2-di-(9Z-octadecenoyl)-sn-glycero-3-phosphoethanolamine + 1,2-dihexadecanoyl-sn-glycero-3-phosphocholine = N-hexadecanoyl-1,2-di-(9Z-octadecenoyl)-sn-glycero-3-phosphoethanolamine + 2-hexadecanoyl-sn-glycero-3-phosphocholine + H(+). It catalyses the reaction a 1,2-diacyl-sn-glycero-3-phosphoethanolamine + a 1,2-diacyl-sn-glycero-3-phosphocholine = an N-acyl-1,2-diacyl-sn-glycero-3-phosphoethanolamine + a 1-acyl-sn-glycero-3-phosphocholine + H(+). The catalysed reaction is a 1,2-diacyl-sn-glycero-3-phosphoethanolamine + a 1,2-diacyl-sn-glycero-3-phosphocholine = an N-acyl-1,2-diacyl-sn-glycero-3-phosphoethanolamine + a 2-acyl-sn-glycero-3-phosphocholine + H(+). The enzyme catalyses 1-hexadecanoyl-2-(9Z-octadecenoyl)-sn-glycero-3-phosphocholine + 1,2-di-(9Z-octadecenoyl)-sn-glycero-3-phosphoethanolamine = N,1,2-tri-(9Z-octadecenoyl)-sn-glycero-3-phosphoethanolamine + 1-hexadecanoyl-sn-glycero-3-phosphocholine + H(+). Its function is as follows. Exhibits both phospholipase A1/2 and acyltransferase activities. Shows phospholipase A1 (PLA1) and A2 (PLA2) activity, catalyzing the calcium-independent release of fatty acids from the sn-1 or sn-2 position of glycerophospholipids. Shows N-acyltransferase activity, catalyzing the calcium-independent transfer of a fatty acyl group at the sn-1 position of phosphatidylcholine (PC) and other glycerophospholipids to the primary amine of phosphatidylethanolamine (PE), forming N-acylphosphatidylethanolamine (NAPE), which serves as precursor for N-acylethanolamines (NAEs). In Homo sapiens (Human), this protein is Phospholipase A and acyltransferase 5.